Reading from the N-terminus, the 143-residue chain is Transcriptional regulator MraZ (143 aa).

2 consecutive SpoVT-AbrB domains span residues 5–47 (EYEH…TLEE) and 76–119 (AVEV…DRET).

It belongs to the MraZ family. As to quaternary structure, forms oligomers.

Its subcellular location is the cytoplasm. The protein localises to the nucleoid. The chain is Transcriptional regulator MraZ from Staphylococcus saprophyticus subsp. saprophyticus (strain ATCC 15305 / DSM 20229 / NCIMB 8711 / NCTC 7292 / S-41).